The following is a 517-amino-acid chain: MDKNKIIVFDTTLRDGEQSPGCSMNTEEKIKVALQLEKLGVDVIEAGFAAASPGDFDAVSRIAQIIKNSSICSLARAVDNDIKQAGLAVQSAAKSRIHTFIATSPIHMQYKLKMSGDEVIKRAIRAVEYAKTFVDDVEFSLEDAGRSEIPFMKEVMDAVIGAGAKTINLPDTVGYRLPTELGAMVKELSAYAGDRAIISVHNHNDLGLATANTLAAVLNGARQIEVTINGLGERAGNSALEEAVMAIKTRKDAFGDLYTTINTPEIYATSRLVATITGVEPQQNKAIVGKNAFAHESGIHQDGVLKHQETYEIMKPEDVGVIKDSTLILGKHSGRAAFRDKIVQLGFDKVSDDELNAAFERFKVLADNKKEISDEDVRMLITDEALNHDKTYDLIGLQISDCTNGVPTAAVAIKYKDEIIKDAAIGDGTMDAIFKTIDRITGFSGELKDYKVISVTEGKDALAKVTTRVSFDETSPAFVGHGLSIDTMLATAKAYIGALNSYLSQKKRLSKSSEHQV.

Residues 6–267 (IIVFDTTLRD…YTTINTPEIY (262 aa)) enclose the Pyruvate carboxyltransferase domain. Asp15, His201, His203, and Asn237 together coordinate Mn(2+). The segment at 393-517 (DLIGLQISDC…RLSKSSEHQV (125 aa)) is regulatory domain.

This sequence belongs to the alpha-IPM synthase/homocitrate synthase family. LeuA type 1 subfamily. As to quaternary structure, homodimer. It depends on Mn(2+) as a cofactor.

It localises to the cytoplasm. It catalyses the reaction 3-methyl-2-oxobutanoate + acetyl-CoA + H2O = (2S)-2-isopropylmalate + CoA + H(+). It functions in the pathway amino-acid biosynthesis; L-leucine biosynthesis; L-leucine from 3-methyl-2-oxobutanoate: step 1/4. In terms of biological role, catalyzes the condensation of the acetyl group of acetyl-CoA with 3-methyl-2-oxobutanoate (2-ketoisovalerate) to form 3-carboxy-3-hydroxy-4-methylpentanoate (2-isopropylmalate). The chain is 2-isopropylmalate synthase from Aliarcobacter butzleri (strain RM4018) (Arcobacter butzleri).